Consider the following 226-residue polypeptide: tRNA (guanine-N(7)-)-methyltransferase (226 aa).

Residues 1–21 (MTHPQQPHGPLRSFGRLKSRP) are disordered. S-adenosyl-L-methionine-binding residues include E59, E84, D111, and D133. The active site involves D133. K137 serves as a coordination point for substrate. The segment at 139-144 (RHNKRR) is interaction with RNA. Residues D169 and 206 to 209 (TRYE) contribute to the substrate site.

The protein belongs to the class I-like SAM-binding methyltransferase superfamily. TrmB family.

It catalyses the reaction guanosine(46) in tRNA + S-adenosyl-L-methionine = N(7)-methylguanosine(46) in tRNA + S-adenosyl-L-homocysteine. Its pathway is tRNA modification; N(7)-methylguanine-tRNA biosynthesis. Its function is as follows. Catalyzes the formation of N(7)-methylguanine at position 46 (m7G46) in tRNA. The sequence is that of tRNA (guanine-N(7)-)-methyltransferase from Caulobacter sp. (strain K31).